The chain runs to 74 residues: Anionic peptide clone 10 (74 aa).

Residues 1-24 (MVSKSLIVLLLVSVLVSTFFTTEA) form the signal peptide.

This sequence belongs to the non-disulfide-bridged peptide (NDBP) superfamily. Long chain multifunctional peptide (group 2) family. As to expression, expressed by the venom gland.

The protein localises to the secreted. Functionally, may be an antimicrobial peptide. The sequence is that of Anionic peptide clone 10 from Tityus costatus (Brazilian scorpion).